A 116-amino-acid chain; its full sequence is Ribosome-binding factor A (116 aa).

The protein belongs to the RbfA family. In terms of assembly, monomer. Binds 30S ribosomal subunits, but not 50S ribosomal subunits or 70S ribosomes.

It is found in the cytoplasm. In terms of biological role, one of several proteins that assist in the late maturation steps of the functional core of the 30S ribosomal subunit. Associates with free 30S ribosomal subunits (but not with 30S subunits that are part of 70S ribosomes or polysomes). Required for efficient processing of 16S rRNA. May interact with the 5'-terminal helix region of 16S rRNA. The sequence is that of Ribosome-binding factor A from Streptococcus sanguinis (strain SK36).